We begin with the raw amino-acid sequence, 450 residues long: Nicotinamide phosphoribosyltransferase (450 aa).

A diphosphate-binding site is contributed by arginine 210. Aspartate 233 is a binding site for beta-nicotinamide D-ribonucleotide. Positions 249 and 310 each coordinate diphosphate. Beta-nicotinamide D-ribonucleotide-binding positions include 310 to 312 (RAD), 364 to 365 (GD), and arginine 403.

This sequence belongs to the NAPRTase family.

It catalyses the reaction beta-nicotinamide D-ribonucleotide + diphosphate = 5-phospho-alpha-D-ribose 1-diphosphate + nicotinamide + H(+). It participates in cofactor biosynthesis; NAD(+) biosynthesis; nicotinamide D-ribonucleotide from 5-phospho-alpha-D-ribose 1-diphosphate and nicotinamide: step 1/1. Catalyzes the condensation of nicotinamide with 5-phosphoribosyl-1-pyrophosphate to yield nicotinamide mononucleotide, an intermediate in the biosynthesis of NAD. This is Nicotinamide phosphoribosyltransferase from Mycoplasma genitalium (strain ATCC 33530 / DSM 19775 / NCTC 10195 / G37) (Mycoplasmoides genitalium).